The sequence spans 384 residues: Putative 8-amino-7-oxononanoate synthase (384 aa).

R19 lines the substrate pocket. Pyridoxal 5'-phosphate is bound at residue 106–107; the sequence is GY. H131 serves as a coordination point for substrate. Pyridoxal 5'-phosphate-binding positions include S177, 202-205, and 233-236; these read DDAH and TLSK. Position 236 is an N6-(pyridoxal phosphate)lysine (K236).

It belongs to the class-II pyridoxal-phosphate-dependent aminotransferase family. BioF subfamily. Homodimer. Pyridoxal 5'-phosphate is required as a cofactor.

The enzyme catalyses 6-carboxyhexanoyl-[ACP] + L-alanine + H(+) = (8S)-8-amino-7-oxononanoate + holo-[ACP] + CO2. The protein operates within cofactor biosynthesis; biotin biosynthesis. Catalyzes the decarboxylative condensation of pimeloyl-[acyl-carrier protein] and L-alanine to produce 8-amino-7-oxononanoate (AON), [acyl-carrier protein], and carbon dioxide. The polypeptide is Putative 8-amino-7-oxononanoate synthase (bioF) (Desulforudis audaxviator (strain MP104C)).